The sequence spans 176 residues: Shikimate kinase (176 aa).

12 to 17 (GSGKST) provides a ligand contact to ATP. Ser16 is a Mg(2+) binding site. 3 residues coordinate substrate: Asp34, Arg58, and Gly80. Position 117 (Arg117) interacts with ATP. Arg136 provides a ligand contact to substrate. Arg153 provides a ligand contact to ATP.

This sequence belongs to the shikimate kinase family. As to quaternary structure, monomer. Mg(2+) serves as cofactor.

The protein resides in the cytoplasm. It catalyses the reaction shikimate + ATP = 3-phosphoshikimate + ADP + H(+). The protein operates within metabolic intermediate biosynthesis; chorismate biosynthesis; chorismate from D-erythrose 4-phosphate and phosphoenolpyruvate: step 5/7. Its function is as follows. Catalyzes the specific phosphorylation of the 3-hydroxyl group of shikimic acid using ATP as a cosubstrate. This Mycobacterium avium (strain 104) protein is Shikimate kinase.